The following is a 1030-amino-acid chain: Teashirt homolog 2 (1030 aa).

Positions 1-120 are disordered; that stretch reads MPRRKQQAPK…THPKLPSEPH (120 aa). Residues 11–42 adopt a coiled-coil conformation; the sequence is RAAGYAQEEVLKEEEEIKEEEEEEEDSGSVAQ. The segment covering 21-37 has biased composition (acidic residues); sequence LKEEEEIKEEEEEEEDS. Polar residues-rich tracts occupy residues 39-49 and 66-95; these read SVAQHQSSNDT and SCQN…QVSD. The segment covering 103-120 has biased composition (basic and acidic residues); it reads DVSDKKANTHPKLPSEPH. Lys-189 participates in a covalent cross-link: Glycyl lysine isopeptide (Lys-Gly) (interchain with G-Cter in SUMO2). 2 C2H2-type zinc fingers span residues 216–240 and 276–300; these read FRCR…ETGH and LKCM…KTKH. The interval 240 to 266 is disordered; it reads HYQDDNRKKDKLRPTSYSKPRKRAFQD. Glycyl lysine isopeptide (Lys-Gly) (interchain with G-Cter in SUMO2) cross-links involve residues Lys-307 and Lys-316. A disordered region spans residues 328 to 348; it reads VNRPCSPDSTTGSLADSFSSQ. Residues 334–348 show a composition bias toward polar residues; sequence PDSTTGSLADSFSSQ. The segment at 381 to 405 adopts a C2H2-type 3; atypical zinc-finger fold; sequence LKCMECGSSHDTLQQLTTHMMVTGH. Lys-418 participates in a covalent cross-link: Glycyl lysine isopeptide (Lys-Gly) (interchain with G-Cter in SUMO2). Polar residues predominate over residues 432–459; that stretch reads SLSETPNSESLAPKPSSNSPSECTASTT. A disordered region spans residues 432 to 488; that stretch reads SLSETPNSESLAPKPSSNSPSECTASTTELKKESKKEKGEGIEDEQGVKSEDYEDSL. Residues 460–482 show a composition bias toward basic and acidic residues; that stretch reads ELKKESKKEKGEGIEDEQGVKSE. Residues Lys-462, Lys-480, Lys-497, and Lys-601 each participate in a glycyl lysine isopeptide (Lys-Gly) (interchain with G-Cter in SUMO2) cross-link. Composition is skewed to basic and acidic residues over residues 608 to 623 and 633 to 664; these read DEVV…HEEA and SFSK…KPEP. 3 disordered regions span residues 608 to 687, 703 to 726, and 759 to 784; these read DEVV…LPSI, KATE…VFHK, and QPID…SPPQ. A Glycyl lysine isopeptide (Lys-Gly) (interchain with G-Cter in SUMO2) cross-link involves residue Lys-652. Residues 710–722 show a composition bias toward low complexity; the sequence is SPSCSSPNSSTSP. Residues 773 to 783 are compositionally biased toward polar residues; it reads SSQAQSCTSPP. Residues Lys-796 and Lys-816 each participate in a glycyl lysine isopeptide (Lys-Gly) (interchain with G-Cter in SUMO2) cross-link. The segment at residues 837–907 is a DNA-binding region (homeobox); the sequence is RKGRQSNWNP…NVKYQLRKTG (71 aa). The C2H2-type 4 zinc finger occupies 922-944; the sequence is FYCSDCASQFRTPSTYISHLESH. A Glycyl lysine isopeptide (Lys-Gly) (interchain with G-Cter in SUMO2) cross-link involves residue Lys-962. Disordered regions lie at residues 965 to 987 and 1009 to 1030; these read QEIS…EDTD and LSKT…VDEE. Positions 968–977 are enriched in polar residues; that stretch reads SRVSSAQRSP. Position 976 is a phosphoserine (Ser-976). A C2H2-type 5 zinc finger spans residues 990-1013; that stretch reads FKCKLCRRTFVSKHAVKLHLSKTH.

It belongs to the teashirt C2H2-type zinc-finger protein family. As to quaternary structure, interacts (via homeobox domain) with APBB1 (via PID domain 1). Sumoylated.

The protein resides in the nucleus. Probable transcriptional regulator involved in developmental processes. May act as a transcriptional repressor (Potential). The chain is Teashirt homolog 2 (Tshz2) from Mus musculus (Mouse).